Consider the following 217-residue polypeptide: N-(5'-phosphoribosyl)anthranilate isomerase (217 aa).

This sequence belongs to the TrpF family.

It catalyses the reaction N-(5-phospho-beta-D-ribosyl)anthranilate = 1-(2-carboxyphenylamino)-1-deoxy-D-ribulose 5-phosphate. The protein operates within amino-acid biosynthesis; L-tryptophan biosynthesis; L-tryptophan from chorismate: step 3/5. This is N-(5'-phosphoribosyl)anthranilate isomerase from Chlorobium chlorochromatii (strain CaD3).